A 255-amino-acid chain; its full sequence is Pyridoxine 5'-phosphate synthase (255 aa).

Asparagine 12 is a 3-amino-2-oxopropyl phosphate binding site. 14 to 15 is a 1-deoxy-D-xylulose 5-phosphate binding site; that stretch reads DH. A 3-amino-2-oxopropyl phosphate-binding site is contributed by arginine 23. Residue histidine 48 is the Proton acceptor of the active site. The 1-deoxy-D-xylulose 5-phosphate site is built by arginine 50 and histidine 55. Glutamate 75 (proton acceptor) is an active-site residue. 1-deoxy-D-xylulose 5-phosphate is bound at residue threonine 105. Catalysis depends on histidine 199, which acts as the Proton donor. 3-amino-2-oxopropyl phosphate is bound by residues glycine 200 and 221–222; that span reads GF.

The protein belongs to the PNP synthase family. As to quaternary structure, homooctamer; tetramer of dimers.

It is found in the cytoplasm. It carries out the reaction 3-amino-2-oxopropyl phosphate + 1-deoxy-D-xylulose 5-phosphate = pyridoxine 5'-phosphate + phosphate + 2 H2O + H(+). The protein operates within cofactor biosynthesis; pyridoxine 5'-phosphate biosynthesis; pyridoxine 5'-phosphate from D-erythrose 4-phosphate: step 5/5. Catalyzes the complicated ring closure reaction between the two acyclic compounds 1-deoxy-D-xylulose-5-phosphate (DXP) and 3-amino-2-oxopropyl phosphate (1-amino-acetone-3-phosphate or AAP) to form pyridoxine 5'-phosphate (PNP) and inorganic phosphate. This Rhodopseudomonas palustris (strain BisB18) protein is Pyridoxine 5'-phosphate synthase.